Reading from the N-terminus, the 195-residue chain is Packaging protein 2 (195 aa).

Residues 1–124 (MAPKKKLQLP…QEQQQRQGYR (124 aa)) are disordered. A compositionally biased stretch (acidic residues) spans 15–53 (TDEEEYWDSQAEEVLDEEEEMMEDWDSLDEASEAEEVSD). Residues 54-63 (ETPSPSVAFP) are compositionally biased toward low complexity.

This sequence belongs to the adenoviridae splicing factor family. Part of a genome packaging complex composed of packaging proteins 1, 2 and 3; this complex specifically binds to the packaging sequence on the left end of viral genomic DNA and performs packaging of the viral genome. Self-assembles into higher-order structures.

Its subcellular location is the host nucleus. Component of the packaging machinery which encapsidates the viral DNA into preformed capsids and transcriptional activator of the viral major late promoter (MLP). Binds, along with packaging proteins 1 and 3, to the specific packaging sequence on the left end of viral genomic DNA and plays an active role in packaging of the viral genome into preformed capsids. Specifically binds to the 5'-TTTG-3' nucleotides of the repeats making up the packaging sequence. Forms a transcription factor called DEF-A through cooperative binding with packaging protein 1. DEF-A binds to downstream elements of the major late promoter (MLP) and stimulates transcription from the MLP after initiation of viral DNA replication. Simultaneously suppresses early gene expression and is thus likely to participate in the early-late switch in the expression pattern of the late viral proteins. May as well enhance transcription from IVa2 and pIX promoters. This Homo sapiens (Human) protein is Packaging protein 2.